The chain runs to 448 residues: MPGFKRILTVTVLALCLPTPGNAQQQCTNGFDLDRSSGQCLDVDECRTIPEACRGDMMCVNQNGGYLCIPRTNPVYRGPYSNPYSNPYSASYPAAAPPLSAPNYPTISRPLICRFGYQMDESNQCVDVDECATDSHQCNPTQICINTEGGYTCSCTDGYWLLEGQCLDIDECRYGYCQQLCANVPGSYSCTCNPGFTLNEDGRSCQDVNECATENPCVQTCVNTYGSFICRCDPGYELEDDGVHCSDMDECSFSEFLCQHECVNQPGTYFCSCPAGYILLDDNRSCQDINECEHRNHTCILQQTCYNLQGGFKCIDPIRCEEPYLRISDNRCMCPAENPGCRDQPFTILYRDMDVVSGRSVPADIFQMQATTRYPGAYYIFQIKSGNDGREFYMRQTGPISATLVMTRPIKGPRDIQLDLEMITVNTVINFRGSSVIRLRIYVSQYPF.

Residues 1–23 (MPGFKRILTVTVLALCLPTPGNA) form the signal peptide. Residues 42–82 (DVDECRTIPEACRGDMMCVNQNGGYLCIPRTNPVYRGPYSN) enclose the EGF-like 1; calcium-binding domain. 17 disulfide bridges follow: cysteine 46-cysteine 59, cysteine 53-cysteine 68, cysteine 131-cysteine 144, cysteine 138-cysteine 153, cysteine 155-cysteine 166, cysteine 172-cysteine 181, cysteine 177-cysteine 190, cysteine 192-cysteine 205, cysteine 211-cysteine 221, cysteine 217-cysteine 230, cysteine 232-cysteine 245, cysteine 251-cysteine 262, cysteine 258-cysteine 271, cysteine 273-cysteine 286, cysteine 292-cysteine 305, cysteine 299-cysteine 314, and cysteine 320-cysteine 332. A Cell attachment site motif is present at residues 54-56 (RGD). In terms of domain architecture, EGF-like 2; calcium-binding spans 127–167 (DVDECATDSHQCNPTQICINTEGGYTCSCTDGYWLLEGQCL). Positions 168-206 (DIDECRYGYCQQLCANVPGSYSCTCNPGFTLNEDGRSCQ) constitute an EGF-like 3; calcium-binding domain. In terms of domain architecture, EGF-like 4; calcium-binding spans 207–246 (DVNECATENPCVQTCVNTYGSFICRCDPGYELEDDGVHCS). Residues 245–448 (CSDMDECSFS…LRIYVSQYPF (204 aa)) form an interaction with LOXL1 region. The region spanning 247 to 287 (DMDECSFSEFLCQHECVNQPGTYFCSCPAGYILLDDNRSCQ) is the EGF-like 5; calcium-binding domain. N-linked (GlcNAc...) asparagine glycosylation is found at asparagine 283 and asparagine 296. The EGF-like 6; calcium-binding domain occupies 288–333 (DINECEHRNHTCILQQTCYNLQGGFKCIDPIRCEEPYLRISDNRCM).

Belongs to the fibulin family. As to quaternary structure, homodimer. Monomer, homodimerizes in presence of Ca(2+). Interacts with ELN. Interacts (via N-terminus) with the integrins ITGAV/ITGB3, ITGAV/ITGB5 and ITGA9/ITGB1. Interacts with FBN1 (via N-terminal domain). Forms a ternary complex with ELN and FBN1. Interacts with EFEMP2 with moderate affinity. Interacts with LOXL1. Post-translationally, N-glycosylated.

The protein localises to the secreted. Its subcellular location is the extracellular space. It is found in the extracellular matrix. Its function is as follows. Essential for elastic fiber formation, is involved in the assembly of continuous elastin (ELN) polymer and promotes the interaction of microfibrils and ELN. Stabilizes and organizes elastic fibers in the skin, lung and vasculature. Promotes adhesion of endothelial cells through interaction of integrins and the RGD motif. Vascular ligand for integrin receptors which may play a role in vascular development and remodeling. May act as an adapter that mediates the interaction between FBN1 and ELN. The polypeptide is Fibulin-5 (FBLN5) (Bos taurus (Bovine)).